We begin with the raw amino-acid sequence, 414 residues long: Ena/VASP-like protein (414 aa).

Positions 1–112 (MSEQSICQAR…NAMLFALNIM (112 aa)) constitute a WH1 domain. Residue Ser-130 is modified to Phosphoserine. Residues 157-369 (ATGPILPPGH…SRVKPAGSVN (213 aa)) form a disordered region. The segment covering 179–204 (GPPPPPPPPVPPPPTGSTPPPPPPLP) has biased composition (pro residues). The segment covering 217–228 (SASGLAAALAGA) has biased composition (low complexity). Positions 220 to 240 (GLAAALAGAKLRRVQRPEDAS) are EVH2 block A. The interval 220–411 (GLAAALAGAK…DAIRQELSGI (192 aa)) is EVH2. A KLKR motif is present at residues 229–232 (KLRR). Residues 240 to 251 (SGGSSPSGTSKS) show a composition bias toward low complexity. Ser-244 and Ser-257 each carry phosphoserine. Residues 263–280 (GGLMEEMNKLLAKRRKAA) are EVH2 block B. Polar residues predominate over residues 297-318 (EDPSTSPSPGTRATSQPPNSSE). Phosphoserine is present on residues Ser-302, Ser-304, Ser-327, Ser-329, Ser-339, Ser-347, Ser-352, and Ser-367. Basic and acidic residues predominate over residues 319–329 (AGRKPWERSNS). Residues 340-360 (RTPSVAKSPEAKSPLQSQPHS) are required for interaction with ZDHHC17. Residues 377 to 411 (DLDRMKQEILEEVVRELHKVKEEIIDAIRQELSGI) form an EVH2 block C region.

The protein belongs to the Ena/VASP family. As to quaternary structure, homotetramer. Binds to the SH3 domains of ABL1, LYN and SRC. Also binds to profilin, with preference for isoform IIa of PFN2, and the WW domain of APBB1/FE65. Binds to SEMA6A. Interacts, via the Pro-rich region, with the C-terminal SH3 domain of DNMBP. Interacts with RAPH1. Binds, via the EVH1 domain, the Pro-rich domain of Listeria monocytogenes actA. Binds, via the EVH1 domain, the Pro-rich domain of ZYX. Interacts with FYB1. Interacts with ZDHHC17. Phosphorylated by PKA; phosphorylation abolishes binding to SH3 domains of ABL and SRC. As to expression, highest expression in thymus and spleen (at protein level). Low levels in placenta, ovary, testis, fat and lung (at protein level). Isoform 1 and isoform 2 are expressed in cortical neurons and glial cells.

Its subcellular location is the cytoplasm. The protein resides in the cytoskeleton. The protein localises to the stress fiber. It is found in the cell projection. It localises to the lamellipodium. In terms of biological role, ena/VASP proteins are actin-associated proteins involved in a range of processes dependent on cytoskeleton remodeling and cell polarity such as axon guidance and lamellipodial and filopodial dynamics in migrating cells. EVL enhances actin nucleation and polymerization. This chain is Ena/VASP-like protein (Evl), found in Mus musculus (Mouse).